Here is a 130-residue protein sequence, read N- to C-terminus: Small ribosomal subunit protein uS11 (130 aa).

Belongs to the universal ribosomal protein uS11 family. Part of the 30S ribosomal subunit. Interacts with proteins S7 and S18. Binds to IF-3.

In terms of biological role, located on the platform of the 30S subunit, it bridges several disparate RNA helices of the 16S rRNA. Forms part of the Shine-Dalgarno cleft in the 70S ribosome. The polypeptide is Small ribosomal subunit protein uS11 (Acholeplasma laidlawii (strain PG-8A)).